We begin with the raw amino-acid sequence, 443 residues long: 2-hydroxyethylphosphonate dioxygenase (443 aa).

One can recognise an HTH cro/C1-type 1 domain in the interval 8–63 (LAHWMNARKYTAAQTADLAGLPLDDLRRLLGDEANEPDPAAATALAEALSVEPSQL). Lys16 is a substrate binding site. Positions 19 to 38 (AAQTADLAGLPLDDLRRLLG) form a DNA-binding region, H-T-H motif. Residues Tyr98 and Asn126 each contribute to the substrate site. His129 contacts Fe cation. Residues Glu176, His182, and Ser196 each coordinate substrate. Residue His182 coordinates Fe cation. The HTH cro/C1-type 2 domain maps to 234–290 (VLDLFLARRAHTRTSAAEAAGVPPADLEAALRSPASETGLTVLRTLGRALGFDYRVL). The segment at residues 245-265 (TRTSAAEAAGVPPADLEAALR) is a DNA-binding region (H-T-H motif).

The protein belongs to the non-heme iron-dependent dioxygenase family. Homodimer. The cofactor is Fe(2+).

The catalysed reaction is 2-hydroxyethylphosphonate + O2 = hydroxymethylphosphonate + formate + H(+). The protein operates within secondary metabolite biosynthesis; bialaphos biosynthesis. Non-heme-dependent dioxygenase that catalyzes the conversion of 2-hydroxyethylphosphonate (HEP) to hydroxymethylphosphonate (HMP) in the biosynthesis of phosphinothricin tripeptide (PTT), also known as bialaphos (BA), a natural-product antibiotic and potent herbicide. PTT contains the unusual amino acid phosphinothricin attached to 2 alanine residues. Synthetic phosphinothricin (glufosinate) is a key component of commercial herbicides. The sequence is that of 2-hydroxyethylphosphonate dioxygenase (hepD) from Streptomyces viridochromogenes (strain DSM 40736 / JCM 4977 / BCRC 1201 / Tue 494).